The following is a 265-amino-acid chain: 3-methyl-2-oxobutanoate hydroxymethyltransferase (265 aa).

Mg(2+)-binding residues include Asp45 and Asp84. 3-methyl-2-oxobutanoate contacts are provided by residues 45-46, Asp84, and Lys112; that span reads DS. Glu114 is a Mg(2+) binding site. Glu181 serves as the catalytic Proton acceptor.

It belongs to the PanB family. In terms of assembly, homodecamer; pentamer of dimers. It depends on Mg(2+) as a cofactor.

The protein localises to the cytoplasm. It carries out the reaction 3-methyl-2-oxobutanoate + (6R)-5,10-methylene-5,6,7,8-tetrahydrofolate + H2O = 2-dehydropantoate + (6S)-5,6,7,8-tetrahydrofolate. It participates in cofactor biosynthesis; (R)-pantothenate biosynthesis; (R)-pantoate from 3-methyl-2-oxobutanoate: step 1/2. In terms of biological role, catalyzes the reversible reaction in which hydroxymethyl group from 5,10-methylenetetrahydrofolate is transferred onto alpha-ketoisovalerate to form ketopantoate. This Yersinia enterocolitica serotype O:8 / biotype 1B (strain NCTC 13174 / 8081) protein is 3-methyl-2-oxobutanoate hydroxymethyltransferase.